The sequence spans 509 residues: Cytochrome P450 monooxygenase fumoA (509 aa).

A helical membrane pass occupies residues 5-27 (LANLNFPYLILSACLSAILLSRF). Residues asparagine 317, asparagine 369, and asparagine 378 are each glycosylated (N-linked (GlcNAc...) asparagine). Cysteine 456 contacts heme. N-linked (GlcNAc...) asparagine glycosylation is present at asparagine 464.

The protein belongs to the cytochrome P450 family. Heme serves as cofactor.

The protein resides in the membrane. It participates in secondary metabolite biosynthesis. Its function is as follows. Cytochrome P450 monooxygenase; part of the gene cluster that mediates the biosynthesis of fumosorinone, a 2-pyridone alkaloid that acts as an inhibitor of protein tyrosine phosphatase 1B which is implicated asa negative regulator of insulin receptor signaling and a potential drug target for the treatment of type II diabetes and other associated metabolic syndromes. The polyketide-amino acid backbone of fumosorinone is first assembled by the PKS-NRPS hybrid fumoS. The PKS modules condense one acetyl-CoA starter unit with 7 malonyl-CoA units, programmed C-methylations occurring after the first 3 and the sixth extensions, and cycles of full reduction occurring after the first 2 extensions. Because fumoS lacks a designated enoyl reductase (ER) domain, the required activity is provided the enoyl reductase fumoC. Upon formation of the polyketide backbone on the thiotemplate, the polyketide is transferred to the NRPS module and linked to tyrosine to produce the acyltetramic acid intermediate called prefumosorinone A. The cytochrome P450 monooxygenase fumoA then probably catalyzes an unprecedented oxidative ring expansion of prefumosorinone A to form prefumosorinone B which contains the 2-pyridone core of fumosorinone. The cytochrome P450 monooxygenase fumoB might hydroxylate the nitrogen of prefumosorinone B, but not the acyltetramic acid prefumosorinone A, to form fumosorinone. The protein is Cytochrome P450 monooxygenase fumoA of Cordyceps fumosorosea (strain ARSEF 2679) (Isaria fumosorosea).